We begin with the raw amino-acid sequence, 461 residues long: Photosystem II CP43 reaction center protein (461 aa).

5 helical membrane-spanning segments follow: residues 57 to 81, 122 to 143, 166 to 188, 243 to 263, and 279 to 300; these read LFEV…SHLA, LRGP…KDKN, KAMF…RIIS, KPFG…LSYS, and WYNN…ASQS. A [CaMn4O5] cluster-binding site is contributed by Glu355. The chain crosses the membrane as a helical span at residues 435 to 459; sequence RARAAAAGFEKGIDRATEPVLAMRD.

This sequence belongs to the PsbB/PsbC family. PsbC subfamily. As to quaternary structure, PSII is composed of 1 copy each of membrane proteins PsbA, PsbB, PsbC, PsbD, PsbE, PsbF, PsbH, PsbI, PsbJ, PsbK, PsbL, PsbM, PsbT, PsbX, PsbY, PsbZ, Psb30/Ycf12, peripheral proteins PsbO, CyanoQ (PsbQ), PsbU, PsbV and a large number of cofactors. It forms dimeric complexes. The cofactor is Binds multiple chlorophylls and provides some of the ligands for the Ca-4Mn-5O cluster of the oxygen-evolving complex. It may also provide a ligand for a Cl- that is required for oxygen evolution. PSII binds additional chlorophylls, carotenoids and specific lipids..

The protein resides in the cellular thylakoid membrane. In terms of biological role, one of the components of the core complex of photosystem II (PSII). It binds chlorophyll and helps catalyze the primary light-induced photochemical processes of PSII. PSII is a light-driven water:plastoquinone oxidoreductase, using light energy to abstract electrons from H(2)O, generating O(2) and a proton gradient subsequently used for ATP formation. The protein is Photosystem II CP43 reaction center protein of Synechococcus elongatus (strain ATCC 33912 / PCC 7942 / FACHB-805) (Anacystis nidulans R2).